Here is a 121-residue protein sequence, read N- to C-terminus: Holo-[acyl-carrier-protein] synthase (121 aa).

Positions 8 and 58 each coordinate Mg(2+).

It belongs to the P-Pant transferase superfamily. AcpS family. Homotrimer. Mg(2+) serves as cofactor.

Its subcellular location is the cytoplasm. The enzyme catalyses apo-[ACP] + CoA = holo-[ACP] + adenosine 3',5'-bisphosphate + H(+). In terms of biological role, transfers the 4'-phosphopantetheine moiety from coenzyme A to a Ser of fatty acid acyl-carrier-protein ACP. Also modifies the D-alanyl carrier protein but fails to recognize PCP and AcpK, an acyl carrier protein of secondary metabolism. The chain is Holo-[acyl-carrier-protein] synthase from Bacillus subtilis (strain 168).